Consider the following 199-residue polypeptide: Probable molybdenum cofactor guanylyltransferase (199 aa).

Residues 9–11 (LAG), lysine 21, aspartate 69, and aspartate 100 contribute to the GTP site. Aspartate 100 contacts Mg(2+).

The protein belongs to the MobA family. The cofactor is Mg(2+).

It localises to the cytoplasm. The catalysed reaction is Mo-molybdopterin + GTP + H(+) = Mo-molybdopterin guanine dinucleotide + diphosphate. In terms of biological role, transfers a GMP moiety from GTP to Mo-molybdopterin (Mo-MPT) cofactor (Moco or molybdenum cofactor) to form Mo-molybdopterin guanine dinucleotide (Mo-MGD) cofactor. The protein is Probable molybdenum cofactor guanylyltransferase of Bacillus cytotoxicus (strain DSM 22905 / CIP 110041 / 391-98 / NVH 391-98).